A 522-amino-acid chain; its full sequence is Subtilisin-like protease 10 (522 aa).

Residues methionine 1–alanine 19 form the signal peptide. Residues alanine 20–glutamine 117 constitute a propeptide that is removed on maturation. An Inhibitor I9 domain is found at serine 36–isoleucine 113. A Peptidase S8 domain is found at asparagine 127 to threonine 405. Active-site charge relay system residues include aspartate 159 and histidine 190. Residue asparagine 251 is glycosylated (N-linked (GlcNAc...) asparagine). Serine 348 acts as the Charge relay system in catalysis. Over residues serine 383–leucine 397 the composition is skewed to polar residues. The tract at residues serine 383–arginine 515 is disordered. N-linked (GlcNAc...) asparagine glycosylation is found at asparagine 392 and asparagine 403. Residues serine 432–asparagine 459 are compositionally biased toward pro residues.

It belongs to the peptidase S8 family.

Its subcellular location is the secreted. Its function is as follows. Secreted subtilisin-like serine protease with keratinolytic activity that contributes to pathogenicity. The chain is Subtilisin-like protease 10 (SUB10) from Trichophyton verrucosum (strain HKI 0517).